The following is a 215-amino-acid chain: MPTSIQFQRSSTAAEAANATVRNYPHHHQKQVQKVSLTRGMADVPEHVELSHTHVVGPSQCFSVVVQDVEAPVSTVWSILSRFEHPQAYKHFVKSCHVVIGDGREVGSVREVRVVSGLPAAFSLERLEIMDDDRHVISFSVVGGDHRLMNYKSVTTVHESEEDSDGKKRTRVVESYVVDVPAGNDKEETCSFADTIVRCNLQSLAKLAENTSKFS.

The segment at 54-209 (HVVGPSQCFS…NLQSLAKLAE (156 aa)) is START-like. C61 and C190 form a disulfide bridge. Abscisate contacts are provided by residues K90, 120-125 (AAFSLE), 147-153 (RLMNYKS), and E174. The short motif at 116–120 (SGLPA) is the Gate loop element. The Latch loop motif lies at 146–148 (HRL).

The protein belongs to the PYR/PYL/RCAR abscisic acid intracellular receptor family. Monomer. Homodimer. Binds ABA on one subunit only. Interacts with HAB1, ABI1 and ABI2, and possibly with other PP2Cs. Binds to CARs protein in an ABA-independent manner, both at the plasma membrane and in the nucleus. Interacts directly with CAR1 and CAR4. Interacts with MYC2 in the nucleus. Interaction with MYC2 is increased in the presence of abscisic acid.

The protein resides in the cytoplasm. It localises to the nucleus. Its subcellular location is the cell membrane. Functionally, receptor for abscisic acid (ABA) required for ABA-mediated responses such as stomatal closure and germination inhibition. Inhibits the activity of group-A protein phosphatases type 2C (PP2Cs) in an ABA-independent manner but more efficiently when activated by ABA. Can be activated by both (-)-ABA and (+)-ABA. May link ABA and jasmonate signaling pathways by modifying MYC2 transcriptional activity, and regulation of JAZ6 and JAZ8 gene expression by MYC2. The protein is Abscisic acid receptor PYL6 (PYL6) of Arabidopsis thaliana (Mouse-ear cress).